A 364-amino-acid chain; its full sequence is 1-aminocyclopropane-1-carboxylate oxidase homolog 11 (364 aa).

One can recognise a Fe2OG dioxygenase domain in the interval 213 to 312; it reads KSLLMICHYY…RISVASFFSS (100 aa). The Fe cation site is built by H237, D239, and H293. 2-oxoglutarate is bound at residue R303.

Belongs to the iron/ascorbate-dependent oxidoreductase family. It depends on Fe(2+) as a cofactor.

The chain is 1-aminocyclopropane-1-carboxylate oxidase homolog 11 from Arabidopsis thaliana (Mouse-ear cress).